The sequence spans 228 residues: Orotate phosphoribosyltransferase (228 aa).

5-phospho-alpha-D-ribose 1-diphosphate-binding positions include arginine 107, lysine 108, lysine 111, and 133–141 (EDLTTDGGS). Position 137 (threonine 137) interacts with orotate.

The protein belongs to the purine/pyrimidine phosphoribosyltransferase family. PyrE subfamily. As to quaternary structure, homodimer. Requires Mg(2+) as cofactor.

The catalysed reaction is orotidine 5'-phosphate + diphosphate = orotate + 5-phospho-alpha-D-ribose 1-diphosphate. The protein operates within pyrimidine metabolism; UMP biosynthesis via de novo pathway; UMP from orotate: step 1/2. Catalyzes the transfer of a ribosyl phosphate group from 5-phosphoribose 1-diphosphate to orotate, leading to the formation of orotidine monophosphate (OMP). The protein is Orotate phosphoribosyltransferase of Jannaschia sp. (strain CCS1).